The chain runs to 146 residues: Protein SprT-like (146 aa).

The SprT-like domain maps to 6 to 141 (YVKTVSIEDF…GCGLCQGKLI (136 aa)). His64 serves as a coordination point for Zn(2+). Residue Glu65 is part of the active site. Zn(2+) is bound at residue His68.

It belongs to the SprT family. It depends on Zn(2+) as a cofactor.

It is found in the cytoplasm. The chain is Protein SprT-like from Streptococcus thermophilus (strain CNRZ 1066).